The primary structure comprises 54 residues: Ribulose bisphosphate carboxylase large chain (54 aa).

Residues 1–2 (MS) constitute a propeptide that is removed on maturation. Residue Pro3 is modified to N-acetylproline. An N6,N6,N6-trimethyllysine modification is found at Lys14.

The protein belongs to the RuBisCO large chain family. Type I subfamily. In terms of assembly, heterohexadecamer of 8 large chains and 8 small chains.

The protein resides in the plastid. Its subcellular location is the chloroplast. The enzyme catalyses 2 (2R)-3-phosphoglycerate + 2 H(+) = D-ribulose 1,5-bisphosphate + CO2 + H2O. The catalysed reaction is D-ribulose 1,5-bisphosphate + O2 = 2-phosphoglycolate + (2R)-3-phosphoglycerate + 2 H(+). In terms of biological role, ruBisCO catalyzes two reactions: the carboxylation of D-ribulose 1,5-bisphosphate, the primary event in carbon dioxide fixation, as well as the oxidative fragmentation of the pentose substrate in the photorespiration process. Both reactions occur simultaneously and in competition at the same active site. The polypeptide is Ribulose bisphosphate carboxylase large chain (rbcL) (Icacina mannii).